The following is a 262-amino-acid chain: Ribose-5-phosphate isomerase A (262 aa).

Substrate contacts are provided by residues 33–36, 89–92, and 102–105; these read TGST, DGAD, and KGGG. The active-site Proton acceptor is the Glu-111. Lys-129 lines the substrate pocket.

The protein belongs to the ribose 5-phosphate isomerase family. In terms of assembly, homodimer.

The enzyme catalyses aldehydo-D-ribose 5-phosphate = D-ribulose 5-phosphate. The protein operates within carbohydrate degradation; pentose phosphate pathway; D-ribose 5-phosphate from D-ribulose 5-phosphate (non-oxidative stage): step 1/1. Its function is as follows. Catalyzes the reversible conversion of ribose-5-phosphate to ribulose 5-phosphate. The chain is Ribose-5-phosphate isomerase A from Roseobacter denitrificans (strain ATCC 33942 / OCh 114) (Erythrobacter sp. (strain OCh 114)).